A 596-amino-acid polypeptide reads, in one-letter code: Probable tripeptidyl-peptidase SED2 (596 aa).

The N-terminal stretch at 1 to 16 (MRLLKFVCLLASVAAA) is a signal peptide. The propeptide at 17–203 (KPTPGASHKV…LESMSVEEFA (187 aa)) is removed in mature form. The region spanning 210–596 (LVTTACLREL…NFQALTKVLP (387 aa)) is the Peptidase S53 domain. N-linked (GlcNAc...) asparagine glycosylation is present at Asn265. Active-site charge relay system residues include Glu286 and Asp290. Asn403 carries N-linked (GlcNAc...) asparagine glycosylation. Residue Ser501 is the Charge relay system of the active site. Positions 543 and 544 each coordinate Ca(2+). Residue Asn572 is glycosylated (N-linked (GlcNAc...) asparagine). The Ca(2+) site is built by Gly576 and Asp578.

Ca(2+) serves as cofactor.

Its subcellular location is the secreted. It is found in the extracellular space. The catalysed reaction is Release of an N-terminal tripeptide from a polypeptide.. Secreted tripeptidyl-peptidase which degrades proteins at acidic pHs and is involved in virulence. This chain is Probable tripeptidyl-peptidase SED2 (SED2), found in Arthroderma benhamiae (strain ATCC MYA-4681 / CBS 112371) (Trichophyton mentagrophytes).